Reading from the N-terminus, the 257-residue chain is Cyclin-C1-1 (257 aa).

This sequence belongs to the cyclin family. Cyclin C subfamily.

The polypeptide is Cyclin-C1-1 (Oryza sativa subsp. japonica (Rice)).